A 272-amino-acid chain; its full sequence is Glutamate racemase (272 aa).

Substrate-binding positions include 10-11 and 42-43; these read DS and YG. Catalysis depends on cysteine 74, which acts as the Proton donor/acceptor. Position 75–76 (75–76) interacts with substrate; the sequence is NT. The Proton donor/acceptor role is filled by cysteine 185. Position 186–187 (186–187) interacts with substrate; that stretch reads TH.

It belongs to the aspartate/glutamate racemases family.

The enzyme catalyses L-glutamate = D-glutamate. It functions in the pathway cell wall biogenesis; peptidoglycan biosynthesis. Its function is as follows. Provides the (R)-glutamate required for cell wall biosynthesis. In Bacillus pumilus (strain SAFR-032), this protein is Glutamate racemase.